A 674-amino-acid polypeptide reads, in one-letter code: HDA1 complex subunit 2 (674 aa).

Residues 185–196 are compositionally biased toward polar residues; the sequence is TVDSTINKDGTP. The tract at residues 185–211 is disordered; sequence TVDSTINKDGTPNSVSSTSSNSNSTSY. Residues 197–211 are compositionally biased toward low complexity; it reads NSVSSTSSNSNSTSY. A coiled-coil region spans residues 468 to 637; it reads FKKKQEVEKS…RNKFLKNYIT (170 aa).

This sequence belongs to the HDA2/3 family. HDA2 subfamily. Heterodimer with HDA3. Component of the HDA1 histone deacetylase complex composed of at least one HDA1 homodimer and one HDA2/HDA3 heterodimer. Interacts with HDA1 and HDA3.

It localises to the nucleus. In terms of biological role, required for activity of HDA1 histone deacetylase complex. The HDA1 histone deacetylase complex is responsible for the deacetylation of lysine residues on the N-terminal part of the core histones (H2A, H2B, H3 and H4). Histone deacetylation gives a tag for epigenetic repression and plays an important role in transcriptional regulation, cell cycle progression and developmental events. This is HDA1 complex subunit 2 (HDA2) from Saccharomyces cerevisiae (strain ATCC 204508 / S288c) (Baker's yeast).